The sequence spans 441 residues: Probable glycine dehydrogenase (decarboxylating) subunit 1 (441 aa).

Belongs to the GcvP family. N-terminal subunit subfamily. The glycine cleavage system is composed of four proteins: P, T, L and H. In this organism, the P 'protein' is a heterodimer of two subunits.

It catalyses the reaction N(6)-[(R)-lipoyl]-L-lysyl-[glycine-cleavage complex H protein] + glycine + H(+) = N(6)-[(R)-S(8)-aminomethyldihydrolipoyl]-L-lysyl-[glycine-cleavage complex H protein] + CO2. The glycine cleavage system catalyzes the degradation of glycine. The P protein binds the alpha-amino group of glycine through its pyridoxal phosphate cofactor; CO(2) is released and the remaining methylamine moiety is then transferred to the lipoamide cofactor of the H protein. This chain is Probable glycine dehydrogenase (decarboxylating) subunit 1, found in Halobacterium salinarum (strain ATCC 700922 / JCM 11081 / NRC-1) (Halobacterium halobium).